The following is a 397-amino-acid chain: Succinate--CoA ligase [ADP-forming] subunit beta (397 aa).

In terms of domain architecture, ATP-grasp spans 9 to 254 (KALLRQYGAP…ETEEDPKELA (246 aa)). Residues Lys-46, 53–55 (GRG), Glu-109, Ser-112, and Glu-117 each bind ATP. The Mg(2+) site is built by Asn-209 and Asp-223. Residues Asn-274 and 331–333 (GIM) each bind substrate.

The protein belongs to the succinate/malate CoA ligase beta subunit family. In terms of assembly, heterotetramer of two alpha and two beta subunits. The cofactor is Mg(2+).

The catalysed reaction is succinate + ATP + CoA = succinyl-CoA + ADP + phosphate. It catalyses the reaction GTP + succinate + CoA = succinyl-CoA + GDP + phosphate. The protein operates within carbohydrate metabolism; tricarboxylic acid cycle; succinate from succinyl-CoA (ligase route): step 1/1. Functionally, succinyl-CoA synthetase functions in the citric acid cycle (TCA), coupling the hydrolysis of succinyl-CoA to the synthesis of either ATP or GTP and thus represents the only step of substrate-level phosphorylation in the TCA. The beta subunit provides nucleotide specificity of the enzyme and binds the substrate succinate, while the binding sites for coenzyme A and phosphate are found in the alpha subunit. This Paracoccus denitrificans (strain Pd 1222) protein is Succinate--CoA ligase [ADP-forming] subunit beta.